The following is a 20-amino-acid chain: FLAKNVAKKLVSHVAKKQLE.

Position 20 is a glutamic acid 1-amide (Glu20).

As to expression, expressed by the venom gland.

It is found in the secreted. This Cupiennius salei (American wandering spider) protein is Short cationic peptide-4d.